The following is a 281-amino-acid chain: Bis(5'-nucleosyl)-tetraphosphatase, symmetrical (281 aa).

This sequence belongs to the Ap4A hydrolase family.

It catalyses the reaction P(1),P(4)-bis(5'-adenosyl) tetraphosphate + H2O = 2 ADP + 2 H(+). In terms of biological role, hydrolyzes diadenosine 5',5'''-P1,P4-tetraphosphate to yield ADP. The chain is Bis(5'-nucleosyl)-tetraphosphatase, symmetrical from Acidovorax sp. (strain JS42).